The chain runs to 212 residues: Protein-L-isoaspartate O-methyltransferase (212 aa).

Residue serine 60 is part of the active site.

The protein belongs to the methyltransferase superfamily. L-isoaspartyl/D-aspartyl protein methyltransferase family.

Its subcellular location is the cytoplasm. It carries out the reaction [protein]-L-isoaspartate + S-adenosyl-L-methionine = [protein]-L-isoaspartate alpha-methyl ester + S-adenosyl-L-homocysteine. Functionally, catalyzes the methyl esterification of L-isoaspartyl residues in peptides and proteins that result from spontaneous decomposition of normal L-aspartyl and L-asparaginyl residues. It plays a role in the repair and/or degradation of damaged proteins. The polypeptide is Protein-L-isoaspartate O-methyltransferase (Methanococcus maripaludis (strain C7 / ATCC BAA-1331)).